The chain runs to 98 residues: Integration host factor subunit alpha (98 aa).

A disordered region spans residues 49–72 (FGNFDLRDKNQRPGRNPKTGEDIP).

This sequence belongs to the bacterial histone-like protein family. In terms of assembly, heterodimer of an alpha and a beta chain.

Its function is as follows. This protein is one of the two subunits of integration host factor, a specific DNA-binding protein that functions in genetic recombination as well as in transcriptional and translational control. In Shewanella loihica (strain ATCC BAA-1088 / PV-4), this protein is Integration host factor subunit alpha.